A 400-amino-acid chain; its full sequence is Acetate kinase (400 aa).

Asn-10 is a binding site for Mg(2+). ATP is bound at residue Lys-17. Arg-91 is a substrate binding site. The active-site Proton donor/acceptor is the Asp-150. Residues 210–214, 285–287, and 333–337 each bind ATP; these read HLGSG, DCR, and GIGEN. Position 387 (Glu-387) interacts with Mg(2+).

This sequence belongs to the acetokinase family. In terms of assembly, homodimer. The cofactor is Mg(2+). Mn(2+) is required as a cofactor.

The protein localises to the cytoplasm. It catalyses the reaction acetate + ATP = acetyl phosphate + ADP. It participates in metabolic intermediate biosynthesis; acetyl-CoA biosynthesis; acetyl-CoA from acetate: step 1/2. In terms of biological role, catalyzes the formation of acetyl phosphate from acetate and ATP. Can also catalyze the reverse reaction. The chain is Acetate kinase from Baumannia cicadellinicola subsp. Homalodisca coagulata.